The sequence spans 97 residues: Small integral membrane protein 8 (97 aa).

A disordered region spans residues 1-24; the sequence is MSSAPEPPTFKKEPPKEKEFQSPG. The span at 9–20 shows a compositional bias: basic and acidic residues; that stretch reads TFKKEPPKEKEF. A helical transmembrane segment spans residues 48 to 70; sequence PVMAFGLVTLSLCVAYIGYLHAI.

The protein belongs to the SMIM8 family.

The protein localises to the membrane. This Homo sapiens (Human) protein is Small integral membrane protein 8 (SMIM8).